A 256-amino-acid polypeptide reads, in one-letter code: 6-carboxyhexanoate--CoA ligase (256 aa).

This sequence belongs to the BioW family. In terms of assembly, homodimer. Mg(2+) is required as a cofactor.

The catalysed reaction is heptanedioate + ATP + CoA = 6-carboxyhexanoyl-CoA + AMP + diphosphate. It participates in metabolic intermediate metabolism; pimeloyl-CoA biosynthesis; pimeloyl-CoA from pimelate: step 1/1. Functionally, catalyzes the transformation of pimelate into pimeloyl-CoA with concomitant hydrolysis of ATP to AMP. The chain is 6-carboxyhexanoate--CoA ligase from Methanobrevibacter ruminantium (strain ATCC 35063 / DSM 1093 / JCM 13430 / OCM 146 / M1) (Methanobacterium ruminantium).